We begin with the raw amino-acid sequence, 309 residues long: NAD kinase (309 aa).

Catalysis depends on aspartate 89, which acts as the Proton acceptor. NAD(+)-binding positions include 89-90 (DG), 163-164 (NE), histidine 174, arginine 191, aspartate 193, and 204-209 (TAYSLS).

The protein belongs to the NAD kinase family. The cofactor is a divalent metal cation.

The protein localises to the cytoplasm. The enzyme catalyses NAD(+) + ATP = ADP + NADP(+) + H(+). In terms of biological role, involved in the regulation of the intracellular balance of NAD and NADP, and is a key enzyme in the biosynthesis of NADP. Catalyzes specifically the phosphorylation on 2'-hydroxyl of the adenosine moiety of NAD to yield NADP. This chain is NAD kinase, found in Shewanella frigidimarina (strain NCIMB 400).